The chain runs to 104 residues: Large ribosomal subunit protein bL21 (104 aa).

The protein belongs to the bacterial ribosomal protein bL21 family. Part of the 50S ribosomal subunit. Contacts protein L20.

Its function is as follows. This protein binds to 23S rRNA in the presence of protein L20. This is Large ribosomal subunit protein bL21 from Helicobacter pylori (strain J99 / ATCC 700824) (Campylobacter pylori J99).